The chain runs to 590 residues: Threonine dehydratase biosynthetic, chloroplastic (590 aa).

Residues 1–44 constitute a chloroplast transit peptide; sequence MLSTSTTNSSILPFRSRASSSTFIARPPANFNSIFTTSVRVFPI. K139 carries the post-translational modification N6-(pyridoxal phosphate)lysine. ACT-like domains follow at residues 416–488 and 509–580; these read ALLG…NISH and EVFV…IDQY.

Belongs to the serine/threonine dehydratase family. Pyridoxal 5'-phosphate is required as a cofactor. Found at higher levels in flowers than in other organs.

The protein resides in the plastid. It localises to the chloroplast. The catalysed reaction is L-threonine = 2-oxobutanoate + NH4(+). Its pathway is amino-acid biosynthesis; L-isoleucine biosynthesis; 2-oxobutanoate from L-threonine: step 1/1. Allosterically inhibited by isoleucine. The chain is Threonine dehydratase biosynthetic, chloroplastic from Cicer arietinum (Chickpea).